Consider the following 481-residue polypeptide: MVSQTVVSSLLVVLGAAGVRAQQRQSLWGQCGGSGWSGPTLCVDGAWCNPQNQWYHQCIPGSGPTTAQPQVPTTTARPTTTLVTSVVSSTTSPSGPVVTNPPVNPGTCPNTPSGLGTPVANQLNDPFTFHNGNKVTSKADWACRQREISELLQRYELGTLPPKPSSVTASFSGSTLSISVSEGGKSISFTVSINNRPSGAGPHPAIINFGTFGASLPVPAGVATINFNNDDIAQQQGGSSRGRGKFYDLYGSSHSAGALTAWAWGVSRIVDALELTQAQTGIDPTRLGVTGCSRNGKGAIVAGALEPRIALTLPQESGAGGSGCWRIATWQKNNGQNVQDSTQIVQENVWFSPNFNSYVNNVNQLPFDHHLLAGLIAPRALYVMENVDMEWLGKISTYGCMGIARKQWEALGALDNFGYSQVGGNSHCSFPSSQQGSELNAFIEKFLLKRSGGNTNIFRSTQTHSSFNLNNWSPWAVPSLN.

A signal peptide spans 1 to 21; the sequence is MVSQTVVSSLLVVLGAAGVRA. Residues 23–59 form the CBM1 domain; the sequence is QRQSLWGQCGGSGWSGPTLCVDGAWCNPQNQWYHQCI. 3 cysteine pairs are disulfide-bonded: C108–C143, C292–C428, and C324–C400. A GXSYXG catalytic site motif motif is present at residues 291–296; sequence GCSRNG. S293 functions as the Nucleophile in the catalytic mechanism. Positions 297, 339, 347, and 391 each coordinate substrate. H427 functions as the Proton donor/acceptor in the catalytic mechanism.

This sequence belongs to the carbohydrate esterase 15 (CE15) family.

It is found in the secreted. The enzyme catalyses a 4-O-methyl-alpha-D-glucuronosyl ester derivative + H2O = 4-O-methyl-alpha-D-glucuronate derivative + an alcohol + H(+). Functionally, glucuronoyl esterase which may play a significant role in biomass degradation, as it is considered to disconnect hemicellulose from lignin through the hydrolysis of the ester bond between 4-O-methyl-D-glucuronic acid residues of glucuronoxylans and aromatic alcohols of lignin. The protein is 4-O-methyl-glucuronoyl methylesterase of Podospora anserina (strain S / ATCC MYA-4624 / DSM 980 / FGSC 10383) (Pleurage anserina).